Here is a 559-residue protein sequence, read N- to C-terminus: Protochlorophyllide-dependent translocon component 52, chloroplastic (559 aa).

The N-terminal 55 residues, 1–55 (MEAALAACALPSLRILNTKPRFRCSFSNPSLPISPNSLITRKSSRFTTAVSSPPS), are a transit peptide targeting the chloroplast. The segment at 44 to 70 (SRFTTAVSSPPSSSAATSTNSPPEPEA) is disordered. The span at 47 to 64 (TTAVSSPPSSSAATSTNS) shows a compositional bias: low complexity. The 111-residue stretch at 85–195 (WYPVMPICDL…STVQHEIIWF (111 aa)) folds into the Rieske domain. Residues C127, H129, C147, and H150 each coordinate [2Fe-2S] cluster. Residues H248 and H253 each coordinate Fe cation. The Redox-active motif motif lies at 483–486 (CSSC). 2 helical membrane-spanning segments follow: residues 493–513 (LNAL…VMAV) and 525–545 (IAVL…SHFI).

It depends on [2Fe-2S] cluster as a cofactor.

The protein resides in the plastid. It localises to the chloroplast inner membrane. It catalyses the reaction protochlorophyllide a + 4 reduced [2Fe-2S]-[ferredoxin] + 2 O2 + 5 H(+) = protochlorophyllide b + 4 oxidized [2Fe-2S]-[ferredoxin] + 3 H2O. Down-regulated by light. Part of a translocon most abundantly expressed in etiolated plants and involved in the protochlorophyllide-dependent import of the precursor NADPH:protochlorophyllide oxidoreductase A (pPORA). The sequence is that of Protochlorophyllide-dependent translocon component 52, chloroplastic from Arabidopsis thaliana (Mouse-ear cress).